A 543-amino-acid chain; its full sequence is Chaperonin GroEL (543 aa).

ATP contacts are provided by residues 30–33, Lys51, 87–91, Gly415, and Asp496; these read TLGP and DGTTT.

This sequence belongs to the chaperonin (HSP60) family. Forms a cylinder of 14 subunits composed of two heptameric rings stacked back-to-back. Interacts with the co-chaperonin GroES.

The protein resides in the cytoplasm. It catalyses the reaction ATP + H2O + a folded polypeptide = ADP + phosphate + an unfolded polypeptide.. Together with its co-chaperonin GroES, plays an essential role in assisting protein folding. The GroEL-GroES system forms a nano-cage that allows encapsulation of the non-native substrate proteins and provides a physical environment optimized to promote and accelerate protein folding. The sequence is that of Chaperonin GroEL from Gluconobacter oxydans (strain 621H) (Gluconobacter suboxydans).